A 222-amino-acid chain; its full sequence is Translation initiation factor 6 (222 aa).

Belongs to the eIF-6 family.

In terms of biological role, binds to the 50S ribosomal subunit and prevents its association with the 30S ribosomal subunit to form the 70S initiation complex. This is Translation initiation factor 6 from Methanothermobacter thermautotrophicus (strain ATCC 29096 / DSM 1053 / JCM 10044 / NBRC 100330 / Delta H) (Methanobacterium thermoautotrophicum).